A 320-amino-acid chain; its full sequence is Ribosomal protein L11 methyltransferase (320 aa).

S-adenosyl-L-methionine contacts are provided by T165, G186, D208, and N251.

This sequence belongs to the methyltransferase superfamily. PrmA family.

The protein resides in the cytoplasm. It catalyses the reaction L-lysyl-[protein] + 3 S-adenosyl-L-methionine = N(6),N(6),N(6)-trimethyl-L-lysyl-[protein] + 3 S-adenosyl-L-homocysteine + 3 H(+). Functionally, methylates ribosomal protein L11. This Limosilactobacillus fermentum (strain NBRC 3956 / LMG 18251) (Lactobacillus fermentum) protein is Ribosomal protein L11 methyltransferase.